The chain runs to 137 residues: Ribonuclease VapC18 (137 aa).

Residues 4-126 enclose the PINc domain; it reads CVDTSAWHHA…YDRVAAITGQ (123 aa). Residues Asp6 and Asp96 each contribute to the Mg(2+) site.

This sequence belongs to the PINc/VapC protein family. Mg(2+) serves as cofactor.

Its function is as follows. Toxic component of a type II toxin-antitoxin (TA) system. An RNase. The cognate antitoxin is VapB18. The polypeptide is Ribonuclease VapC18 (Mycobacterium tuberculosis (strain ATCC 25618 / H37Rv)).